We begin with the raw amino-acid sequence, 335 residues long: Probable magnesium transporter NIPA1 (335 aa).

Residues methionine 1–aspartate 7 lie on the Extracellular side of the membrane. A helical transmembrane segment spans residues asparagine 8–isoleucine 28. Residues lysine 29 to tryptophan 55 lie on the Cytoplasmic side of the membrane. A helical membrane pass occupies residues tryptophan 56–phenylalanine 76. The Extracellular segment spans residues alanine 77–alanine 79. A helical transmembrane segment spans residues isoleucine 80 to isoleucine 100. Residues leucine 101–lysine 104 lie on the Cytoplasmic side of the membrane. Residues leucine 105–leucine 125 form a helical membrane-spanning segment. Residues histidine 126 to alanine 143 are Extracellular-facing. Residues isoleucine 144–phenylalanine 164 form a helical membrane-spanning segment. The Cytoplasmic segment spans residues tyrosine 165–valine 179. A helical membrane pass occupies residues glycine 180–isoleucine 200. At lysine 201–tyrosine 212 the chain is on the extracellular side. The helical transmembrane segment at phenylalanine 213–leucine 233 threads the bilayer. Residues asparagine 234–valine 244 lie on the Cytoplasmic side of the membrane. The helical transmembrane segment at isoleucine 245–phenylalanine 265 threads the bilayer. Over lysine 266 to serine 272 the chain is Extracellular. A helical transmembrane segment spans residues glycine 273 to leucine 293. The Cytoplasmic portion of the chain corresponds to histidine 294–serine 335. A compositionally biased stretch (polar residues) spans alanine 303–asparagine 321. The disordered stretch occupies residues alanine 303–serine 335. Over residues serine 322–serine 335 the composition is skewed to low complexity.

The protein belongs to the NIPA (TC 2.A.7) family. Homodimer.

The protein localises to the cell membrane. Its subcellular location is the early endosome. In terms of biological role, acts as a Mg(2+) transporter. Can also transport other divalent cations such as Fe(2+), Sr(2+), Ba(2+), Mn(2+) and Co(2+) but to a much less extent than Mg(2+). The chain is Probable magnesium transporter NIPA1 from Arabidopsis thaliana (Mouse-ear cress).